Consider the following 470-residue polypeptide: METNGIKLTPRDIVSKLNEYIVGQDDAKRKVAIALRNRYRRSLLTEEEKQEVAPKNILMIGPTGVGKTEIARRMARLVGAPFIKVEATKFTEVGYVGRDVESMVRDLVDVAVRLVKDQKKALVQDEAQDKANEKLVKLLVPSMKKKANNNTNSNNPLESLFGGSIPNFGQNNDDEEETPTDEVKTKRSEIKQQLLNGQLEDEKVRLKVEQDPAAMGMLGTNQNQQMQDMMNQLMPKKKVEREVPVKTARKILTDEFADELIDQETANQEAIELAEQMGIIFIDEIDKVATNNQNSGQDVSRQGVQRDILPILEGSMVQTKYGTVNTEHMLFIGAGAFHVSKPSDLIPELQGRFPIRVELESLSVEDFVRILTEPKLSLIKQYEALLQTEQVTVKFTDEAIKRLAEIAFQVNQDTDNIGARRLHTILEKMLEDLSFEAPSMPNAVVDITPQYVDDKLKSISTNKDLSAFIL.

ATP is bound by residues Val22 and 64-69; that span reads GVGKTE. Residues 145 to 187 are disordered; the sequence is KKANNNTNSNNPLESLFGGSIPNFGQNNDDEEETPTDEVKTKR. ATP contacts are provided by Asp283, Glu348, and Arg420.

Belongs to the ClpX chaperone family. HslU subfamily. A double ring-shaped homohexamer of HslV is capped on each side by a ring-shaped HslU homohexamer. The assembly of the HslU/HslV complex is dependent on binding of ATP.

The protein resides in the cytoplasm. In terms of biological role, ATPase subunit of a proteasome-like degradation complex; this subunit has chaperone activity. The binding of ATP and its subsequent hydrolysis by HslU are essential for unfolding of protein substrates subsequently hydrolyzed by HslV. HslU recognizes the N-terminal part of its protein substrates and unfolds these before they are guided to HslV for hydrolysis. The chain is ATP-dependent protease ATPase subunit HslU from Staphylococcus saprophyticus subsp. saprophyticus (strain ATCC 15305 / DSM 20229 / NCIMB 8711 / NCTC 7292 / S-41).